The primary structure comprises 484 residues: Probable receptor-like protein kinase At5g18500 (484 aa).

A helical membrane pass occupies residues 21 to 41 (IIVIVLSAIFVVVLAISLWLT). The disordered stretch occupies residues 72 to 135 (RVDEVSSSNG…SVSSANPLTA (64 aa)). Basic and acidic residues predominate over residues 91–105 (KFGDKEPEKGIKAES). Residues 125 to 134 (SSVSSANPLT) show a composition bias toward polar residues. Phosphothreonine is present on Thr-155. Positions 166–445 (FSRDNIIGDG…MLESEEYPIA (280 aa)) constitute a Protein kinase domain. Residues 172 to 180 (IGDGGYGVV) and Lys-194 contribute to the ATP site. Tyr-239 carries the post-translational modification Phosphotyrosine. Asp-292 acts as the Proton acceptor in catalysis. Position 296 is a phosphoserine (Ser-296). Phosphothreonine is present on residues Thr-326 and Thr-331. Tyr-339 is subject to Phosphotyrosine. Positions 425–484 (EKRPRMSQVARMLESEEYPIAREDRRRRRSQNGTTRDSDPPRNSTDTDKSEYHDLKPEGG) are disordered. Residues 460–484 (RDSDPPRNSTDTDKSEYHDLKPEGG) show a composition bias toward basic and acidic residues.

It belongs to the protein kinase superfamily. Ser/Thr protein kinase family.

The protein resides in the cell membrane. The enzyme catalyses L-seryl-[protein] + ATP = O-phospho-L-seryl-[protein] + ADP + H(+). It carries out the reaction L-threonyl-[protein] + ATP = O-phospho-L-threonyl-[protein] + ADP + H(+). The protein is Probable receptor-like protein kinase At5g18500 of Arabidopsis thaliana (Mouse-ear cress).